The primary structure comprises 86 residues: MDPYKVIIRPVVTEKAVAMIENENKLTFIVDRRATKQDIKRAVEAMFDVKVEKVNTLITMRGEKKAYVKLKPEYSASEIAARIGLF.

It belongs to the universal ribosomal protein uL23 family. Part of the 50S ribosomal subunit. Contacts protein L29.

In terms of biological role, binds to 23S rRNA. One of the proteins that surrounds the polypeptide exit tunnel on the outside of the ribosome. The polypeptide is Large ribosomal subunit protein uL23 (Thermococcus onnurineus (strain NA1)).